The sequence spans 574 residues: High-affinity methionine permease (574 aa).

The Cytoplasmic segment spans residues 1–61 (MSEGRTFLSQ…TELDQGEKQL (61 aa)). Residue lysine 28 forms a Glycyl lysine isopeptide (Lys-Gly) (interchain with G-Cter in ubiquitin) linkage. A helical transmembrane segment spans residues 62-82 (GILSCIGLICNRMLGTGVFAV). At 83 to 92 (SSTIYTLCGS) the chain is on the extracellular side. A helical transmembrane segment spans residues 93-113 (VGLALIMWAVGAIIAISGLYV). Over 114–140 (YMEFGTAIPKNGGEKNYLEAIFRKPKF) the chain is Cytoplasmic. Residues 141-161 (FITCMYAAYIFFLGWAAGNSI) traverse the membrane as a helical segment. The Extracellular portion of the chain corresponds to 162–182 (NTAIMFLTAADTEVTKWNQRG). A helical transmembrane segment spans residues 183-203 (IGVAVVFFAFLINSLNVKIGL). The Cytoplasmic segment spans residues 204-207 (YLQN). Residues 208-228 (ILGIFKIGIVLFISITGWVAL) form a helical membrane-spanning segment. Residues 229–293 (GGGLKDGYQS…VRTLKIAGPT (65 aa)) are Extracellular-facing. The chain crosses the membrane as a helical span at residues 294 to 314 (SMVFLAIIYIFVNIAYFAVVP). Residues 315–340 (KDKLISSKLILAADFFDIVFGGQAKR) are Cytoplasmic-facing. The chain crosses the membrane as a helical span at residues 341-361 (AAAALVGLSALGNVLSVIFSQ). Residues 362 to 418 (GRIIQQLGREGVLPFSNFFASSKPFNSPMVGLFQHFIVCTVTILAPPPGDAYLLVQN) are Extracellular-facing. Residues 419–439 (LISYPMNIINFAISAGLLWIY) form a helical membrane-spanning segment. The Cytoplasmic segment spans residues 440–455 (WQRRQGKIEWNPPIKA). Residues 456–476 (GVFVTGFFTLSNLYLIIAPYV) traverse the membrane as a helical segment. The Extracellular portion of the chain corresponds to 477 to 490 (PPSNGESVYSSMPY). Residues 491–511 (WIHCVIAWGIFFFGGVYYVVW) traverse the membrane as a helical segment. Residues 512 to 574 (AQLLPRWGHY…HYKSEQEKSL (63 aa)) lie on the Cytoplasmic side of the membrane. Threonine 552 is subject to Phosphothreonine. Serine 573 carries the post-translational modification Phosphoserine.

To yeast low affinity methionine permease (MUP3).

It is found in the membrane. Its function is as follows. High affinity permease for methionine. The chain is High-affinity methionine permease (MUP1) from Saccharomyces cerevisiae (strain ATCC 204508 / S288c) (Baker's yeast).